The chain runs to 216 residues: ATP-dependent Clp protease proteolytic subunit (216 aa).

Serine 101 acts as the Nucleophile in catalysis. Residue histidine 126 is part of the active site.

The protein belongs to the peptidase S14 family. Component of the chloroplastic Clp protease core complex.

Its subcellular location is the plastid. The protein localises to the chloroplast stroma. It catalyses the reaction Hydrolysis of proteins to small peptides in the presence of ATP and magnesium. alpha-casein is the usual test substrate. In the absence of ATP, only oligopeptides shorter than five residues are hydrolyzed (such as succinyl-Leu-Tyr-|-NHMec, and Leu-Tyr-Leu-|-Tyr-Trp, in which cleavage of the -Tyr-|-Leu- and -Tyr-|-Trp bonds also occurs).. In terms of biological role, cleaves peptides in various proteins in a process that requires ATP hydrolysis. Has a chymotrypsin-like activity. Plays a major role in the degradation of misfolded proteins. In Zea mays (Maize), this protein is ATP-dependent Clp protease proteolytic subunit.